We begin with the raw amino-acid sequence, 76 residues long: Large ribosomal subunit protein bL31 (76 aa).

This sequence belongs to the bacterial ribosomal protein bL31 family. Type A subfamily. Part of the 50S ribosomal subunit.

Functionally, binds the 23S rRNA. This Rhizorhabdus wittichii (strain DSM 6014 / CCUG 31198 / JCM 15750 / NBRC 105917 / EY 4224 / RW1) (Sphingomonas wittichii) protein is Large ribosomal subunit protein bL31.